A 210-amino-acid chain; its full sequence is Calcium-activated potassium channel subunit beta-4 (210 aa).

Topologically, residues 1–19 (MAKLRVSYEYTEAEDKSIR) are cytoplasmic. A helical membrane pass occupies residues 20 to 40 (LGLFLIVSGILSLFIFGFCWL). Residues 41–167 (SPALQDLQAT…DVLLQRTHDE (127 aa)) lie on the Extracellular side of the membrane. 2 N-linked (GlcNAc...) asparagine glycosylation sites follow: N53 and N90. Residues 168-188 (IVLLHCFLWPVVAFVVGVLIV) traverse the membrane as a helical segment. Residues 189–210 (VLTICAKSLAVKAEAMKKRKFS) are Cytoplasmic-facing.

This sequence belongs to the KCNMB (TC 8.A.14.1) family. KCNMB4 subfamily. Interacts with KCNMA1 tetramer. There are probably 4 molecules of KCMNB4 per KCNMA1 tetramer. Interacts with FMR1 (via N-terminus). Post-translationally, phosphorylated. Phosphorylation modulates its effect on KCNMA1 activation kinetics. N-glycosylated. A highly glycosylated form is promoted by KCNMA1. Glycosylation, which is not required for the interaction with KCNMA1 and subcellular location, increases protection against charybdotoxin.

The protein resides in the membrane. Regulatory subunit of the calcium activated potassium KCNMA1 (maxiK) channel. Modulates the calcium sensitivity and gating kinetics of KCNMA1, thereby contributing to KCNMA1 channel diversity. Decreases the gating kinetics and calcium sensitivity of the KCNMA1 channel, but with fast deactivation kinetics. May decrease KCNMA1 channel openings at low calcium concentrations but increases channel openings at high calcium concentrations. Makes KCNMA1 channel resistant to 100 nM charybdotoxin (CTX) toxin concentrations. This chain is Calcium-activated potassium channel subunit beta-4 (Kcnmb4), found in Rattus norvegicus (Rat).